The following is a 477-amino-acid chain: Stromelysin-1 (477 aa).

Positions 1–17 (MKNLPILLLLCVAACSA) are cleaved as a signal peptide. A propeptide spans 18–99 (YPLDRSARDE…SRCGVPDVGH (82 aa)) (activation peptide). A Cysteine switch motif is present at residues 90 to 97 (SRCGVPDV). Cys-92 is a binding site for Zn(2+). N-linked (GlcNAc...) asparagine glycosylation occurs at Asn-120. Positions 124 and 158 each coordinate Ca(2+). 2 residues coordinate Zn(2+): His-168 and Asp-170. 4 residues coordinate Ca(2+): Asp-175, Gly-176, Gly-178, and Val-180. His-183 contributes to the Zn(2+) binding site. Ca(2+) contacts are provided by Gly-190, Asn-192, and Asp-194. Position 196 (His-196) interacts with Zn(2+). Ca(2+) contacts are provided by Asp-198, Asp-199, and Glu-201. Zn(2+) is bound at residue His-218. Glu-219 is an active-site residue. Zn(2+) is bound by residues His-222 and His-228. The disordered stretch occupies residues 260–285 (QSLYGPPPASPDSPVEPSEPEPPAPG). 4 Hemopexin repeats span residues 287–336 (LAMC…WPSL), 337–383 (PSGI…GFPP), 385–433 (VRKI…FPGI), and 434–477 (DSKL…WFNC). Cys-290 and Cys-477 form a disulfide bridge. Asp-297 serves as a coordination point for Ca(2+). Asp-389 and Asp-438 together coordinate Ca(2+).

This sequence belongs to the peptidase M10A family. The cofactor is Ca(2+). Requires Zn(2+) as cofactor.

The protein localises to the secreted. It localises to the extracellular space. Its subcellular location is the extracellular matrix. The catalysed reaction is Preferential cleavage where P1', P2' and P3' are hydrophobic residues.. Metalloproteinase with a rather broad substrate specificity that can degrade fibronectin, laminin, gelatins of type I, III, IV, and V; collagens III, IV, X, and IX, and cartilage proteoglycans. Activates different molecules including growth factors, plasminogen or other matrix metalloproteinases such as MMP9. Once released into the extracellular matrix (ECM), the inactive pro-enzyme is activated by the plasmin cascade signaling pathway. Also acts intracellularly. For example, in dopaminergic neurons, gets activated by the serine protease HTRA2 upon stress and plays a pivotal role in DA neuronal degeneration by mediating microglial activation and alpha-synuclein/SNCA cleavage. In addition, plays a role in immune response and possesses antiviral activity against various viruses. Mechanistically, translocates from the cytoplasm into the cell nucleus upon virus infection to influence NF-kappa-B activities. This is Stromelysin-1 (MMP3) from Equus caballus (Horse).